Here is a 454-residue protein sequence, read N- to C-terminus: N-myc 2 proto-oncogene protein (454 aa).

3 disordered regions span residues 132 to 166 (SEKM…HSGT), 230 to 269 (VAAP…DEEE), and 325 to 374 (PSPY…VRRR). Over residues 151-161 (PGAGAASPAGR) the composition is skewed to low complexity. Positions 256 to 269 (ALSDEVDEEEDEEE) are enriched in acidic residues. Residues 363-374 (RKSDSEDSVRRR) show a composition bias toward basic and acidic residues. Positions 371-423 (VRRRNHNILERQRRNDLRSSFTTLRDHVPELVKNEKAAKVVILKKACEYVHYL) constitute a bHLH domain. Positions 423-444 (LQAKEHQLLMEKEKLQARQQQL) are leucine-zipper.

As to quaternary structure, efficient DNA binding requires dimerization with another bHLH protein.

It is found in the nucleus. This Marmota monax (Woodchuck) protein is N-myc 2 proto-oncogene protein (N-MYC2).